The chain runs to 76 residues: Dolichyl-diphosphooligosaccharide--protein glycosyltransferase subunit OST5 (76 aa).

Transmembrane regions (helical) follow at residues 14-34 (FYPVCAFLFCVIGFAFFATFI) and 54-74 (ALIASMSLGLGLFFVLLAGGI).

Belongs to the OST5 family. Component of the oligosaccharyltransferase (OST) complex.

It is found in the membrane. Its function is as follows. Subunit of the oligosaccharyl transferase (OST) complex that catalyzes the initial transfer of a defined glycan (Glc(3)Man(9)GlcNAc(2) in eukaryotes) from the lipid carrier dolichol-pyrophosphate to an asparagine residue within an Asn-X-Ser/Thr consensus motif in nascent polypeptide chains, the first step in protein N-glycosylation. N-glycosylation occurs cotranslationally and the complex associates with the Sec61 complex at the channel-forming translocon complex that mediates protein translocation across the endoplasmic reticulum (ER). All subunits are required for a maximal enzyme activity. This is Dolichyl-diphosphooligosaccharide--protein glycosyltransferase subunit OST5 from Dictyostelium discoideum (Social amoeba).